The primary structure comprises 396 residues: Anhydro-N-acetylmuramic acid kinase (396 aa).

An ATP-binding site is contributed by 19–26 (GTSADGID).

The protein belongs to the anhydro-N-acetylmuramic acid kinase family.

It carries out the reaction 1,6-anhydro-N-acetyl-beta-muramate + ATP + H2O = N-acetyl-D-muramate 6-phosphate + ADP + H(+). It participates in amino-sugar metabolism; 1,6-anhydro-N-acetylmuramate degradation. It functions in the pathway cell wall biogenesis; peptidoglycan recycling. In terms of biological role, catalyzes the specific phosphorylation of 1,6-anhydro-N-acetylmuramic acid (anhMurNAc) with the simultaneous cleavage of the 1,6-anhydro ring, generating MurNAc-6-P. Is required for the utilization of anhMurNAc either imported from the medium or derived from its own cell wall murein, and thus plays a role in cell wall recycling. The polypeptide is Anhydro-N-acetylmuramic acid kinase (Colwellia psychrerythraea (strain 34H / ATCC BAA-681) (Vibrio psychroerythus)).